The chain runs to 483 residues: Keratin, type II cytoskeletal 8 (483 aa).

Residues methionine 1–phenylalanine 25 are compositionally biased toward polar residues. Residues methionine 1–serine 43 are disordered. Residues methionine 1–glutamine 90 form a head region. Serine 9 is modified (phosphoserine; by PKC/PRKCE). Lysine 11 is covalently cross-linked (Glycyl lysine isopeptide (Lys-Gly) (interchain with G-Cter in SUMO2)). Phosphoserine occurs at positions 13, 15, 21, and 22. An Omega-N-methylarginine modification is found at arginine 23. The residue at position 24 (serine 24) is a Phosphoserine; by PKC/PRKCE. Serine 24 is subject to Phosphoserine. Threonine 26 carries the phosphothreonine modification. Over residues threonine 26–serine 43 the composition is skewed to low complexity. Phosphoserine is present on serine 27. At arginine 32 the chain carries Omega-N-methylarginine. Phosphoserine occurs at positions 34, 37, and 39. Arginine 40 carries the omega-N-methylarginine modification. Phosphoserine occurs at positions 43, 44, and 47. Arginine 49 carries the post-translational modification Asymmetric dimethylarginine; alternate. Residue arginine 49 is modified to Omega-N-methylarginine; alternate. Serine 51 bears the Phosphoserine mark. The interval glutamate 91 to leucine 126 is coil 1A. An IF rod domain is found at glutamate 91 to leucine 402. Position 101 is an N6-malonyllysine (lysine 101). Glycyl lysine isopeptide (Lys-Gly) (interchain with G-Cter in SUMO2) cross-links involve residues lysine 122 and lysine 130. Positions glutamine 127–tyrosine 143 are linker 1. A coil 1B region spans residues isoleucine 144–leucine 235. Lysine 197 is covalently cross-linked (Glycyl lysine isopeptide (Lys-Gly) (interchain with G-Cter in SUMO1); alternate). A Glycyl lysine isopeptide (Lys-Gly) (interchain with G-Cter in SUMO2); alternate cross-link involves residue lysine 197. Lysine 207 is subject to N6-acetyllysine. The tract at residues glutamine 236–isoleucine 259 is linker 12. Residues serine 253, serine 258, and serine 274 each carry the phosphoserine modification. Residues isoleucine 260–glutamate 398 form a coil 2 region. The segment at alanine 261–leucine 382 is necessary for interaction with PNN. Residue lysine 285 forms a Glycyl lysine isopeptide (Lys-Gly) (interchain with G-Cter in SUMO2) linkage. A Glycyl lysine isopeptide (Lys-Gly) (interchain with G-Cter in SUMO2); alternate cross-link involves residue lysine 295. Lysine 295 bears the N6-acetyllysine; alternate mark. A Glycyl lysine isopeptide (Lys-Gly) (interchain with G-Cter in SUMO2) cross-link involves residue lysine 304. Residue lysine 325 forms a Glycyl lysine isopeptide (Lys-Gly) (interchain with G-Cter in SUMO2); alternate linkage. Lysine 325 is modified (N6-acetyllysine; alternate). A Glycyl lysine isopeptide (Lys-Gly) (interchain with G-Cter in SUMO2) cross-link involves residue lysine 393. A tail region spans residues glutamate 399–lysine 483. Serine 400, serine 404, serine 410, serine 417, serine 424, serine 426, and serine 432 each carry phosphoserine. Residue lysine 472 forms a Glycyl lysine isopeptide (Lys-Gly) (interchain with G-Cter in SUMO1); alternate linkage. A Glycyl lysine isopeptide (Lys-Gly) (interchain with G-Cter in SUMO2); alternate cross-link involves residue lysine 472. A phosphoserine mark is found at serine 475, serine 477, serine 478, and serine 482.

Belongs to the intermediate filament family. As to quaternary structure, heterotetramer of two type I and two type II keratins. Forms a heterodimer with KRT18. Associates with KRT20. Interacts with PNN. When associated with KRT19, interacts with DMD. Interacts with TCHP. Interacts with APEX1. Interacts with GPER1. Interacts with EPPK1. Interacts with PKP1 and PKP2. O-glycosylated. O-GlcNAcylation at multiple sites increases solubility, and decreases stability by inducing proteasomal degradation. In terms of processing, O-glycosylated (O-GlcNAcylated), in a cell cycle-dependent manner. Expressed in cardiac and striated muscle. Expressed at Z-lines within the muscle fibers and at Z-line and M-line domains at costameres at the sarcolemmal membrane (at protein level). Observed in coagulating gland, bladder, salivary gland, kidney, spleen, thymus, lung and heart. Also observed in ventral prostate, seminal vesicle and liver where expression increases following castration.

Its subcellular location is the cytoplasm. It localises to the nucleus. The protein resides in the nucleoplasm. The protein localises to the nucleus matrix. Its function is as follows. Together with KRT19, helps to link the contractile apparatus to dystrophin at the costameres of striated muscle. This Rattus norvegicus (Rat) protein is Keratin, type II cytoskeletal 8 (Krt8).